We begin with the raw amino-acid sequence, 410 residues long: Cysteine desulfurase IscS (410 aa).

Residues 80 to 81 (AT), N160, Q188, and 208 to 210 (SGH) contribute to the pyridoxal 5'-phosphate site. Position 211 is an N6-(pyridoxal phosphate)lysine (K211). T248 serves as a coordination point for pyridoxal 5'-phosphate. C334 (cysteine persulfide intermediate) is an active-site residue. Position 334 (C334) interacts with [2Fe-2S] cluster.

It belongs to the class-V pyridoxal-phosphate-dependent aminotransferase family. NifS/IscS subfamily. In terms of assembly, homodimer. Forms a heterotetramer with IscU, interacts with other sulfur acceptors. The cofactor is pyridoxal 5'-phosphate.

It localises to the cytoplasm. The enzyme catalyses (sulfur carrier)-H + L-cysteine = (sulfur carrier)-SH + L-alanine. The protein operates within cofactor biosynthesis; iron-sulfur cluster biosynthesis. Master enzyme that delivers sulfur to a number of partners involved in Fe-S cluster assembly, tRNA modification or cofactor biosynthesis. Catalyzes the removal of elemental sulfur atoms from cysteine to produce alanine. Functions as a sulfur delivery protein for Fe-S cluster synthesis onto IscU, an Fe-S scaffold assembly protein, as well as other S acceptor proteins. In Rickettsia bellii (strain OSU 85-389), this protein is Cysteine desulfurase IscS.